Reading from the N-terminus, the 409-residue chain is MSSHPIQVFSEIGKLKKVMLHRPGKELENLLPDYLERLLFDDIPFLEDAQKEHDAFAQALRDEGIEVLYLEQLAAESLTSPEIRDQFIEEYLDEANIRDRQTKVAIRELLHGIKDNQELVEKTMAGIQKVELPEIPDEAKDLTDLVESDYPFAIDPMPNLYFTRDPFATIGNAVSLNHMFADTRNRETLYGKYIFKYHPIYGGKVDLVYNREEDTRIEGGDELILSKDVLAVGISQRTDAASIEKLLVNIFKKNVGFKKVLAFEFANNRKFMHLDTVFTMVDYDKFTIHPEIEGDLHVYSVTYENEKLKIVEEKGDLAELLAQNLGVEKVHLIRCGGGNIVAAAREQWNDGSNTLTIAPGVVVVYDRNTVTNKILEEYGLRLIKIRGSELVRGRGGPRCMSMPFEREEV.

Cysteine 399 acts as the Amidino-cysteine intermediate in catalysis.

This sequence belongs to the arginine deiminase family.

The protein localises to the cytoplasm. It catalyses the reaction L-arginine + H2O = L-citrulline + NH4(+). It functions in the pathway amino-acid degradation; L-arginine degradation via ADI pathway; carbamoyl phosphate from L-arginine: step 1/2. This is Arginine deiminase from Streptococcus pneumoniae (strain 70585).